We begin with the raw amino-acid sequence, 211 residues long: Probable nicotinate-nucleotide adenylyltransferase (211 aa).

It belongs to the NadD family.

The catalysed reaction is nicotinate beta-D-ribonucleotide + ATP + H(+) = deamido-NAD(+) + diphosphate. Its pathway is cofactor biosynthesis; NAD(+) biosynthesis; deamido-NAD(+) from nicotinate D-ribonucleotide: step 1/1. Catalyzes the reversible adenylation of nicotinate mononucleotide (NaMN) to nicotinic acid adenine dinucleotide (NaAD). This chain is Probable nicotinate-nucleotide adenylyltransferase, found in Shewanella frigidimarina (strain NCIMB 400).